The following is a 420-amino-acid chain: ATP phosphoribosyltransferase regulatory subunit (420 aa).

It belongs to the class-II aminoacyl-tRNA synthetase family. HisZ subfamily. As to quaternary structure, heteromultimer composed of HisG and HisZ subunits.

Its subcellular location is the cytoplasm. Its pathway is amino-acid biosynthesis; L-histidine biosynthesis; L-histidine from 5-phospho-alpha-D-ribose 1-diphosphate: step 1/9. In terms of biological role, required for the first step of histidine biosynthesis. May allow the feedback regulation of ATP phosphoribosyltransferase activity by histidine. This is ATP phosphoribosyltransferase regulatory subunit from Bacillus cereus (strain ATCC 14579 / DSM 31 / CCUG 7414 / JCM 2152 / NBRC 15305 / NCIMB 9373 / NCTC 2599 / NRRL B-3711).